Consider the following 380-residue polypeptide: Two-component response regulator ORR28 (380 aa).

The Response regulatory domain occupies 13-130 (SAMVIDEDKC…TIQNLWQHLD (118 aa)). Aspartate 65 is subject to 4-aspartylphosphate. Residues 169 to 223 (RKYYLMWTPHLQKKFLHALEILGEGQISLMIMDVDNIDRKQISTHLQKHRLQLKK) constitute a DNA-binding region (myb-like GARP). Residues 225–245 (LSKASFTKGSNEDTSNPSAKN) are disordered. Over residues 228-245 (ASFTKGSNEDTSNPSAKN) the composition is skewed to polar residues.

It belongs to the ARR family. Type-B subfamily. Post-translationally, two-component system major event consists of a His-to-Asp phosphorelay between a sensor histidine kinase (HK) and a response regulator (RR). In plants, the His-to-Asp phosphorelay involves an additional intermediate named Histidine-containing phosphotransfer protein (HPt). This multistep phosphorelay consists of a His-Asp-His-Asp sequential transfer of a phosphate group between first a His and an Asp of the HK protein, followed by the transfer to a conserved His of the HPt protein and finally the transfer to an Asp in the receiver domain of the RR protein.

It is found in the nucleus. Its function is as follows. Transcriptional activator that binds specific DNA sequence. Functions as a response regulator involved in His-to-Asp phosphorelay signal transduction system. Phosphorylation of the Asp residue in the receiver domain activates the ability of the protein to promote the transcription of target genes. May directly activate some type-A response regulators in response to cytokinins. This Oryza sativa subsp. indica (Rice) protein is Two-component response regulator ORR28.